The primary structure comprises 561 residues: Arginine--tRNA ligase (561 aa).

A 'HIGH' region motif is present at residues proline 108–histidine 118.

Belongs to the class-I aminoacyl-tRNA synthetase family. In terms of assembly, monomer.

Its subcellular location is the cytoplasm. It catalyses the reaction tRNA(Arg) + L-arginine + ATP = L-arginyl-tRNA(Arg) + AMP + diphosphate. The polypeptide is Arginine--tRNA ligase (Haemophilus ducreyi (strain 35000HP / ATCC 700724)).